The chain runs to 347 residues: Toluene-4-sulfonate monooxygenase system iron-sulfur subunit TsaM1 (347 aa).

One can recognise a Rieske domain in the interval Trp7–Ile109. [2Fe-2S] cluster contacts are provided by Cys48, His50, Cys67, and His70.

As to quaternary structure, homotetramer. Part of the p-toluenesulfonate methyl-monooxygenase complex TsaBM, comprising the reductase TsaB and the oxygenase TsaM. [2Fe-2S] cluster serves as cofactor.

The enzyme catalyses toluene-4-sulfonate + NADH + O2 + H(+) = 4-(hydroxymethyl)benzenesulfonate + NAD(+) + H2O. Functionally, involved in the toluene-4-sulfonate degradation pathway. Does not discriminate between the sulfonate and the carboxyl substituents and can also be involved in the p-toluenecarboxylate degradation pathway. Can use toluene-4-sulfonate, p-toluate, m-toluate and 4-ethylbenzoate as substrates, but not p-xylene, toluene and p-cresol. Also catalyzes the demethylation of 4-methoxybenzoate to 4-hydroxybenzoate. The protein is Toluene-4-sulfonate monooxygenase system iron-sulfur subunit TsaM1 (tsaM1) of Comamonas testosteroni (Pseudomonas testosteroni).